A 226-amino-acid chain; its full sequence is Cytidylate kinase (226 aa).

G12–T20 is an ATP binding site.

The protein belongs to the cytidylate kinase family. Type 1 subfamily.

It is found in the cytoplasm. It carries out the reaction CMP + ATP = CDP + ADP. The catalysed reaction is dCMP + ATP = dCDP + ADP. The sequence is that of Cytidylate kinase from Xanthomonas campestris pv. campestris (strain 8004).